Consider the following 1040-residue polypeptide: Multidrug resistance protein MdtB (1040 aa).

12 helical membrane-spanning segments follow: residues 16–36, 347–367, 369–389, 396–416, 440–460, 472–492, 537–557, 863–883, 888–908, 911–931, 968–988, and 998–1018; these read FILR…AGII, LMLA…NIPA, IIPA…MVFL, LTLM…IVVI, IGFT…PLLF, FAVT…TLTP, WLTL…WIFI, LGST…VLGV, FIHP…ALLA, IAGA…IGIV, ILMT…STGV, and IGMV…TPVI.

Belongs to the resistance-nodulation-cell division (RND) (TC 2.A.6) family. MdtB subfamily. In terms of assembly, part of a tripartite efflux system composed of MdtA, MdtB and MdtC. MdtB forms a heteromultimer with MdtC.

It localises to the cell inner membrane. This is Multidrug resistance protein MdtB from Cronobacter sakazakii (strain ATCC BAA-894) (Enterobacter sakazakii).